The following is a 67-amino-acid chain: Large ribosomal subunit protein bL35 (67 aa).

It belongs to the bacterial ribosomal protein bL35 family.

This Leptothrix cholodnii (strain ATCC 51168 / LMG 8142 / SP-6) (Leptothrix discophora (strain SP-6)) protein is Large ribosomal subunit protein bL35.